Consider the following 475-residue polypeptide: 1,3-beta-glucanosyltransferase gel2 (475 aa).

The first 21 residues, 1 to 21 (MLPTYVRLFTAVCALATTASA), serve as a signal peptide directing secretion. A disulfide bridge connects residues C69 and C98. The (1,3-beta-D-glucosyl)n site is built by Y87, N159, E160, and D201. The Proton donor role is filled by E160. Cystine bridges form between C215–C350 and C234–C265. N-linked (GlcNAc...) asparagine glycosylation occurs at N236. The active-site Nucleophile is the E262. Y294 serves as a coordination point for (1,3-beta-D-glucosyl)n. N311, N339, and N357 each carry an N-linked (GlcNAc...) asparagine glycan. The segment at 420-451 (GESNTPGAHSSGSTSGSSSSGGSSSSSSDKES) is disordered. Positions 429–446 (SSGSTSGSSSSGGSSSSS) are enriched in low complexity. S451 carries the GPI-like-anchor amidated serine lipid modification. Residues 452–475 (AAGTISVPFVGLLSAASFMAFFML) constitute a propeptide, removed in mature form.

This sequence belongs to the glycosyl hydrolase 72 family. Post-translationally, the GPI-like anchor contains a phosphoceramide lipid group.

It is found in the cell membrane. Functionally, splits internally a 1,3-beta-glucan molecule and transfers the newly generated reducing end (the donor) to the non-reducing end of another 1,3-beta-glucan molecule (the acceptor) forming a 1,3-beta linkage, resulting in the elongation of 1,3-beta-glucan chains in the cell wall. Involved in cell wall morphogenesis. In Aspergillus fumigatus (strain CBS 144.89 / FGSC A1163 / CEA10) (Neosartorya fumigata), this protein is 1,3-beta-glucanosyltransferase gel2 (gel2).